Reading from the N-terminus, the 414-residue chain is Ornithine aminotransferase (414 aa).

Cysteine 154 and cysteine 163 are joined by a disulfide. N6-(pyridoxal phosphate)lysine is present on lysine 262.

It belongs to the class-III pyridoxal-phosphate-dependent aminotransferase family. As to quaternary structure, homodimer. Requires pyridoxal 5'-phosphate as cofactor. The disulfide bond between Cys-154 and Cys-163 is reduced by TRX1 which increases OAT catalytic activity.

Its subcellular location is the cytoplasm. It catalyses the reaction a 2-oxocarboxylate + L-ornithine = L-glutamate 5-semialdehyde + an L-alpha-amino acid. The catalysed reaction is L-ornithine + 2-oxoglutarate = L-glutamate 5-semialdehyde + L-glutamate. It functions in the pathway amino-acid biosynthesis; L-proline biosynthesis; L-glutamate 5-semialdehyde from L-ornithine: step 1/1. Unlike for mammalian OATs, activity is increased by TRX1-mediated reduction of the disulfide bond between Cys-154 and Cys-163. Binding to TRX1 may also induce conformational changes that facilitate substrate binding. Functionally, catalyzes the transamination of alpha-ketoglutarate with ornithine or N-acetylornithine and of glutamate-5-semialdehyde with glutamate and alanine. This Plasmodium chabaudi chabaudi protein is Ornithine aminotransferase.